We begin with the raw amino-acid sequence, 451 residues long: Cobalamin reductase PduS (451 aa).

2 consecutive 4Fe-4S ferredoxin-type domains span residues 255–284 and 300–330; these read TVLSVARTVCEQCRLCTDLCPRHLIGHELS and PQLLLSALTCSECNVCESVACPVGISPMRIN. 8 residues coordinate [4Fe-4S] cluster: cysteine 264, cysteine 267, cysteine 270, cysteine 274, cysteine 309, cysteine 312, cysteine 315, and cysteine 320.

This sequence belongs to the PduS cobalamin reductase family. In terms of assembly, monomeric when purified anaerobically, dimeric under aerobic conditions. Forms a complex with PduO. Interacts with PduT, probably via the N-terminus of PduS. The cofactor is [4Fe-4S] cluster. Requires FMN as cofactor.

Its subcellular location is the bacterial microcompartment. It participates in polyol metabolism; 1,2-propanediol degradation. A protein that aids in conversion of cob(III)alamin to cob(II)alamin and then to cob(I)alamin in the bacterial microcompartment (BMC) dedicated to 1,2-propanediol (1,2-PD) degradation. The latter step requires PduO. No free cob(I)alamin is released, suggesting a complex is formed with PduO that finishes conversion to adenosylcobalamin. PduS and PduO allow regeneration of the adenosylcobalamin cofactor within the BMC. Another study showed reduction of cob(II)alamin to cob(I)alamin in the absence of PduO. Both reactions require NADH. Cyanocobalamin (CN-Cbl) is not a substrate for the first reaction. Cobalamin reduction probably occurs spontaneously in the presence of free reduced flavin nucleotides, this protein may be involved in electron transfer for this reduction. Functionally, the 1,2-PD-specific bacterial microcompartment (BMC) concentrates low levels of 1,2-PD catabolic enzymes, concentrates volatile reaction intermediates thus enhancing pathway flux and keeps the level of toxic, mutagenic propionaldehyde low. This chain is Cobalamin reductase PduS, found in Salmonella typhimurium (strain LT2 / SGSC1412 / ATCC 700720).